We begin with the raw amino-acid sequence, 181 residues long: Inner membrane-spanning protein YciB (181 aa).

Helical transmembrane passes span 10 to 30 (LIIF…GALI), 50 to 70 (MHLI…ILHD), 72 to 92 (SFIK…LGVS), 118 to 138 (VTWY…YVAF), and 148 to 168 (FKVF…VLYL).

This sequence belongs to the YciB family.

Its subcellular location is the cell inner membrane. In terms of biological role, plays a role in cell envelope biogenesis, maintenance of cell envelope integrity and membrane homeostasis. This Shewanella halifaxensis (strain HAW-EB4) protein is Inner membrane-spanning protein YciB.